The chain runs to 265 residues: HTH-type transcriptional activator CfaD (265 aa).

The 98-residue stretch at 164–261 folds into the HTH araC/xylS-type domain; it reads DKVRNVIEKD…GVTPKQFFTY (98 aa). DNA-binding regions (H-T-H motif) lie at residues 181 to 202 and 228 to 251; these read GIIADAFNVSEITIRKRLESEN and ISQISNMIGISSASYFIRVFNKHY.

As to quaternary structure, homodimer.

Its function is as follows. Transcriptional activator of the CFA/I adhesin (cfaA and cfaB) genes of enterotoxigenic E.coli at 37 degrees Celsius. Also represses the silencing effect of H-NS (hns). This is HTH-type transcriptional activator CfaD from Escherichia coli.